We begin with the raw amino-acid sequence, 193 residues long: 3-isopropylmalate dehydratase small subunit (193 aa).

Belongs to the LeuD family. LeuD type 1 subfamily. As to quaternary structure, heterodimer of LeuC and LeuD.

The enzyme catalyses (2R,3S)-3-isopropylmalate = (2S)-2-isopropylmalate. The protein operates within amino-acid biosynthesis; L-leucine biosynthesis; L-leucine from 3-methyl-2-oxobutanoate: step 2/4. Catalyzes the isomerization between 2-isopropylmalate and 3-isopropylmalate, via the formation of 2-isopropylmaleate. The chain is 3-isopropylmalate dehydratase small subunit from Bacillus thuringiensis subsp. konkukian (strain 97-27).